The chain runs to 65 residues: Toxin KTx8 (65 aa).

Residues 1–25 form the signal peptide; that stretch reads MNKVCFVVVLVLFVALAAYVSPIEG. 3 cysteine pairs are disulfide-bonded: C31–C53, C38–C61, and C42–C63.

Belongs to the short scorpion toxin superfamily. Potassium channel inhibitor family. Alpha-KTx 11 subfamily. Expressed by the venom gland.

Its subcellular location is the secreted. Its function is as follows. This recombinant toxin inhibits the mammalian voltage-gated potassium channels Kv1.3/KCNA3 in vitro with an IC(50) of 26.40 nM. The sequence is that of Toxin KTx8 from Lychas mucronatus (Chinese swimming scorpion).